A 287-amino-acid polypeptide reads, in one-letter code: Pyridoxal kinase PdxY (287 aa).

Residues Ser-10 and 45 to 46 (TQ) contribute to the substrate site. Residues Asp-112, Ala-144, Glu-149, Lys-182, and 209–212 (RPLV) contribute to the ATP site. Asp-224 serves as a coordination point for substrate.

This sequence belongs to the pyridoxine kinase family. PdxY subfamily. As to quaternary structure, homodimer. Requires Mg(2+) as cofactor.

The catalysed reaction is pyridoxal + ATP = pyridoxal 5'-phosphate + ADP + H(+). It participates in cofactor metabolism; pyridoxal 5'-phosphate salvage; pyridoxal 5'-phosphate from pyridoxal: step 1/1. Pyridoxal kinase involved in the salvage pathway of pyridoxal 5'-phosphate (PLP). Catalyzes the phosphorylation of pyridoxal to PLP. The polypeptide is Pyridoxal kinase PdxY (Shigella dysenteriae serotype 1 (strain Sd197)).